Here is a 303-residue protein sequence, read N- to C-terminus: Ornithine carbamoyltransferase (303 aa).

Carbamoyl phosphate is bound by residues 53-56 (STRT), Q80, R104, and 131-134 (HPCQ). Residues N162, D222, and 226–227 (SM) contribute to the L-ornithine site. Carbamoyl phosphate contacts are provided by residues 261-262 (CL) and R289.

It belongs to the aspartate/ornithine carbamoyltransferase superfamily. OTCase family.

It localises to the cytoplasm. It catalyses the reaction carbamoyl phosphate + L-ornithine = L-citrulline + phosphate + H(+). It functions in the pathway amino-acid biosynthesis; L-arginine biosynthesis; L-arginine from L-ornithine and carbamoyl phosphate: step 1/3. Reversibly catalyzes the transfer of the carbamoyl group from carbamoyl phosphate (CP) to the N(epsilon) atom of ornithine (ORN) to produce L-citrulline. The protein is Ornithine carbamoyltransferase of Mesorhizobium japonicum (strain LMG 29417 / CECT 9101 / MAFF 303099) (Mesorhizobium loti (strain MAFF 303099)).